The following is an 871-amino-acid chain: Coatomer subunit gamma-2 (871 aa).

A compositionally biased stretch (basic and acidic residues) spans 1-11; that stretch reads MIKKFDKKDEE. The segment at 1–20 is disordered; it reads MIKKFDKKDEESGSGSNPFR. HEAT repeat units follow at residues 64 to 101, 283 to 320, 321 to 355, 356 to 392, 395 to 430, and 467 to 504; these read TEAT…ISED, RELA…KHPS, AVTA…GSES, SVDR…KYPR, SVMM…ENPE, and PVPS…QNEN. Thr-594 carries the post-translational modification Phosphothreonine.

This sequence belongs to the COPG family. As to quaternary structure, oligomeric complex. Binds to CDC42. Interacts with JAGN1. Interacts with TMED10 (via cytoplasmic domain).

The protein resides in the cytoplasm. The protein localises to the cytosol. Its subcellular location is the golgi apparatus membrane. It is found in the cytoplasmic vesicle. It localises to the COPI-coated vesicle membrane. The coatomer is a cytosolic protein complex that binds to dilysine motifs and reversibly associates with Golgi non-clathrin-coated vesicles, which further mediate biosynthetic protein transport from the ER, via the Golgi up to the trans Golgi network. Coatomer complex is required for budding from Golgi membranes, and is essential for the retrograde Golgi-to-ER transport of dilysine-tagged proteins. In mammals, the coatomer can only be recruited by membranes associated to ADP-ribosylation factors (ARFs), which are small GTP-binding proteins; the complex also influences the Golgi structural integrity, as well as the processing, activity, and endocytic recycling of LDL receptors. The chain is Coatomer subunit gamma-2 (COPG2) from Bos taurus (Bovine).